Here is a 361-residue protein sequence, read N- to C-terminus: DNA replication and repair protein RecF (361 aa).

30–37 (GPNGSGKT) is a binding site for ATP.

Belongs to the RecF family.

It localises to the cytoplasm. In terms of biological role, the RecF protein is involved in DNA metabolism; it is required for DNA replication and normal SOS inducibility. RecF binds preferentially to single-stranded, linear DNA. It also seems to bind ATP. The chain is DNA replication and repair protein RecF from Yersinia pseudotuberculosis serotype O:1b (strain IP 31758).